Reading from the N-terminus, the 191-residue chain is Protein YceI (191 aa).

The signal sequence occupies residues 1–22 (MKKSLLGLTFASLMFSAGSAVA).

It belongs to the UPF0312 family. Type 1 subfamily.

It is found in the periplasm. The sequence is that of Protein YceI from Escherichia coli O17:K52:H18 (strain UMN026 / ExPEC).